The chain runs to 327 residues: Transaldolase (327 aa).

Lys-132 functions as the Schiff-base intermediate with substrate in the catalytic mechanism.

Belongs to the transaldolase family. Type 1 subfamily.

Its subcellular location is the cytoplasm. It catalyses the reaction D-sedoheptulose 7-phosphate + D-glyceraldehyde 3-phosphate = D-erythrose 4-phosphate + beta-D-fructose 6-phosphate. The protein operates within carbohydrate degradation; pentose phosphate pathway; D-glyceraldehyde 3-phosphate and beta-D-fructose 6-phosphate from D-ribose 5-phosphate and D-xylulose 5-phosphate (non-oxidative stage): step 2/3. Transaldolase is important for the balance of metabolites in the pentose-phosphate pathway. This Chlamydia trachomatis serovar D (strain ATCC VR-885 / DSM 19411 / UW-3/Cx) protein is Transaldolase.